The following is a 1171-amino-acid chain: DNA-directed RNA polymerase subunit beta (1171 aa).

It belongs to the RNA polymerase beta chain family. As to quaternary structure, the RNAP catalytic core consists of 2 alpha, 1 beta, 1 beta' and 1 omega subunit. When a sigma factor is associated with the core the holoenzyme is formed, which can initiate transcription.

It carries out the reaction RNA(n) + a ribonucleoside 5'-triphosphate = RNA(n+1) + diphosphate. In terms of biological role, DNA-dependent RNA polymerase catalyzes the transcription of DNA into RNA using the four ribonucleoside triphosphates as substrates. This is DNA-directed RNA polymerase subunit beta from Kineococcus radiotolerans (strain ATCC BAA-149 / DSM 14245 / SRS30216).